A 309-amino-acid polypeptide reads, in one-letter code: Methionyl-tRNA formyltransferase (309 aa).

(6S)-5,6,7,8-tetrahydrofolate is bound at residue 107–110 (SLLP).

It belongs to the Fmt family.

It catalyses the reaction L-methionyl-tRNA(fMet) + (6R)-10-formyltetrahydrofolate = N-formyl-L-methionyl-tRNA(fMet) + (6S)-5,6,7,8-tetrahydrofolate + H(+). Its function is as follows. Attaches a formyl group to the free amino group of methionyl-tRNA(fMet). The formyl group appears to play a dual role in the initiator identity of N-formylmethionyl-tRNA by promoting its recognition by IF2 and preventing the misappropriation of this tRNA by the elongation apparatus. In Borrelia recurrentis (strain A1), this protein is Methionyl-tRNA formyltransferase.